The chain runs to 445 residues: Phosphoglucosamine mutase 1 (445 aa).

S102 serves as the catalytic Phosphoserine intermediate. 4 residues coordinate Mg(2+): S102, D241, D243, and D245. Residue S102 is modified to Phosphoserine.

This sequence belongs to the phosphohexose mutase family. Mg(2+) serves as cofactor. Activated by phosphorylation.

The catalysed reaction is alpha-D-glucosamine 1-phosphate = D-glucosamine 6-phosphate. In terms of biological role, catalyzes the conversion of glucosamine-6-phosphate to glucosamine-1-phosphate. The polypeptide is Phosphoglucosamine mutase 1 (Shewanella baltica (strain OS185)).